The primary structure comprises 27 residues: CAAFGSFCGLPGLVDCCSGRCFIVCLL.

Intrachain disulfides connect Cys-1/Cys-17, Cys-8/Cys-21, and Cys-16/Cys-25.

Belongs to the conotoxin O1 superfamily. As to expression, expressed by the venom duct.

The protein localises to the secreted. Delta-conotoxins bind to site 6 of voltage-gated sodium channels (Nav) and inhibit the inactivation process. This toxin inhibits tetrodotoxin(TTX)-sensitive sodium channels. A test on mouse Nav1.6/SCN8A confirms this sensitivity. The chain is Delta-conotoxin TsVIA from Conus tessulatus (Tessellate cone).